The sequence spans 219 residues: Ribose-5-phosphate isomerase A (219 aa).

Residues 28-31 (TGST), 81-84 (DGAD), and 94-97 (KGGG) contribute to the substrate site. E103 acts as the Proton acceptor in catalysis. K121 contacts substrate.

Belongs to the ribose 5-phosphate isomerase family. Homodimer.

The enzyme catalyses aldehydo-D-ribose 5-phosphate = D-ribulose 5-phosphate. Its pathway is carbohydrate degradation; pentose phosphate pathway; D-ribose 5-phosphate from D-ribulose 5-phosphate (non-oxidative stage): step 1/1. Functionally, catalyzes the reversible conversion of ribose-5-phosphate to ribulose 5-phosphate. In Methylibium petroleiphilum (strain ATCC BAA-1232 / LMG 22953 / PM1), this protein is Ribose-5-phosphate isomerase A.